Consider the following 376-residue polypeptide: Tetraacyldisaccharide 4'-kinase (376 aa).

51 to 58 lines the ATP pocket; that stretch reads AVGGTGKT.

The protein belongs to the LpxK family.

It catalyses the reaction a lipid A disaccharide + ATP = a lipid IVA + ADP + H(+). It functions in the pathway glycolipid biosynthesis; lipid IV(A) biosynthesis; lipid IV(A) from (3R)-3-hydroxytetradecanoyl-[acyl-carrier-protein] and UDP-N-acetyl-alpha-D-glucosamine: step 6/6. Its function is as follows. Transfers the gamma-phosphate of ATP to the 4'-position of a tetraacyldisaccharide 1-phosphate intermediate (termed DS-1-P) to form tetraacyldisaccharide 1,4'-bis-phosphate (lipid IVA). The protein is Tetraacyldisaccharide 4'-kinase of Bacteroides fragilis (strain ATCC 25285 / DSM 2151 / CCUG 4856 / JCM 11019 / LMG 10263 / NCTC 9343 / Onslow / VPI 2553 / EN-2).